The chain runs to 241 residues: Methylthioribulose-1-phosphate dehydratase (241 aa).

Residues 1–11 (MSSLCDTSNGE) are compositionally biased toward polar residues. Residues 1–20 (MSSLCDTSNGESHADPCQDK) form a disordered region. Cys96 provides a ligand contact to substrate. Zn(2+) contacts are provided by His114 and His116. Residue Glu138 is the Proton donor/acceptor of the active site. His194 contacts Zn(2+).

This sequence belongs to the aldolase class II family. MtnB subfamily. The cofactor is Zn(2+).

The protein localises to the cytoplasm. It catalyses the reaction 5-(methylsulfanyl)-D-ribulose 1-phosphate = 5-methylsulfanyl-2,3-dioxopentyl phosphate + H2O. It functions in the pathway amino-acid biosynthesis; L-methionine biosynthesis via salvage pathway; L-methionine from S-methyl-5-thio-alpha-D-ribose 1-phosphate: step 2/6. Catalyzes the dehydration of methylthioribulose-1-phosphate (MTRu-1-P) into 2,3-diketo-5-methylthiopentyl-1-phosphate (DK-MTP-1-P). Functions in the methionine salvage pathway. May play a role in apoptosis. This is Methylthioribulose-1-phosphate dehydratase from Osmerus mordax (Rainbow smelt).